Consider the following 267-residue polypeptide: Tryptophan synthase alpha chain (267 aa).

Catalysis depends on proton acceptor residues E49 and D60.

The protein belongs to the TrpA family. In terms of assembly, tetramer of two alpha and two beta chains.

The enzyme catalyses (1S,2R)-1-C-(indol-3-yl)glycerol 3-phosphate + L-serine = D-glyceraldehyde 3-phosphate + L-tryptophan + H2O. The protein operates within amino-acid biosynthesis; L-tryptophan biosynthesis; L-tryptophan from chorismate: step 5/5. The alpha subunit is responsible for the aldol cleavage of indoleglycerol phosphate to indole and glyceraldehyde 3-phosphate. This chain is Tryptophan synthase alpha chain, found in Acidothermus cellulolyticus (strain ATCC 43068 / DSM 8971 / 11B).